A 139-amino-acid chain; its full sequence is D-ribose pyranase (139 aa).

Residue H20 is the Proton donor of the active site. Residues D28, H106, and 128 to 130 contribute to the substrate site; that span reads YAN.

It belongs to the RbsD / FucU family. RbsD subfamily. In terms of assembly, homodecamer.

Its subcellular location is the cytoplasm. It catalyses the reaction beta-D-ribopyranose = beta-D-ribofuranose. It participates in carbohydrate metabolism; D-ribose degradation; D-ribose 5-phosphate from beta-D-ribopyranose: step 1/2. Catalyzes the interconversion of beta-pyran and beta-furan forms of D-ribose. In Pectobacterium carotovorum subsp. carotovorum (strain PC1), this protein is D-ribose pyranase.